Consider the following 196-residue polypeptide: tRNA(Phe) 7-((3-amino-3-carboxypropyl)-4-demethylwyosine(37)-N(4))-methyltransferase (196 aa).

The protein belongs to the TYW3 family.

The catalysed reaction is 4-demethyl-7-[(3S)-3-amino-3-carboxypropyl]wyosine(37) in tRNA(Phe) + S-adenosyl-L-methionine = 7-[(3S)-3-amino-3-carboxypropyl]wyosine(37) in tRNA(Phe) + S-adenosyl-L-homocysteine + H(+). Functionally, S-adenosyl-L-methionine-dependent methyltransferase that acts as a component of the wyosine derivatives biosynthesis pathway. Probably methylates N-4 position of wybutosine-86 to produce wybutosine-72. The polypeptide is tRNA(Phe) 7-((3-amino-3-carboxypropyl)-4-demethylwyosine(37)-N(4))-methyltransferase (Archaeoglobus fulgidus (strain ATCC 49558 / DSM 4304 / JCM 9628 / NBRC 100126 / VC-16)).